The chain runs to 854 residues: Protein SEY1 homolog (854 aa).

Residues Met-1–Ser-724 are Cytoplasmic-facing. The GB1/RHD3-type G domain maps to Gly-49–Ser-291. Residue Gly-59 to Ser-66 participates in GTP binding. A coiled-coil region spans residues Lys-336–Lys-386. The helical transmembrane segment at Leu-725–Leu-745 threads the bilayer. Topologically, residues Thr-746–Pro-748 are lumenal. The chain crosses the membrane as a helical span at residues Ile-749–Gln-769. The Cytoplasmic segment spans residues Leu-770–Asp-854. Residues Gly-808 to Asp-854 form a disordered region. Over residues Ser-822–Ser-839 the composition is skewed to low complexity. The segment covering Cys-845–Asp-854 has biased composition (basic and acidic residues).

Belongs to the TRAFAC class dynamin-like GTPase superfamily. GB1/RHD3 GTPase family. RHD3 subfamily.

The protein localises to the endoplasmic reticulum membrane. In terms of biological role, probable GTP-binding protein that may be involved in cell development. This is Protein SEY1 homolog from Trypanosoma brucei brucei (strain 927/4 GUTat10.1).